Consider the following 81-residue polypeptide: Conotoxin ViKr92 (81 aa).

The first 22 residues, 1 to 22 (MKLTWMMIVAVLFLTAWTFVTA), serve as a signal peptide directing secretion. The propeptide occupies 23–51 (DDTRYKLENPFLKARNELQKLEASQLNER). 3 disulfides stabilise this stretch: Cys53–Cys70, Cys60–Cys74, and Cys69–Cys78.

The protein belongs to the conotoxin O1 superfamily. In terms of tissue distribution, expressed by the venom duct.

Its subcellular location is the secreted. The chain is Conotoxin ViKr92 from Conus virgo (Virgin cone).